Consider the following 435-residue polypeptide: Cytokine-dependent hematopoietic cell linker (435 aa).

A phosphotyrosine; by LYN mark is found at Tyr69 and Tyr96. Residues 155–303 (KINKTPLPPP…PDPTKPDEKD (149 aa)) are disordered. Positions 160–165 (PLPPPR) are mediates interaction with PLCG1; essential for BCR signaling; involved in restoration of BCR-induced calcium response and ERK2 and JNK2 activation in BLNK-deficient cells expressing LAT. The segment at 178–182 (PPAPP) is mediates interaction with LAT, GRB2, and FGR; involved in translocation to the glycolipid-enriched microdomain and restoration of BCR-induced calcium response in BLNK-deficient DT40 cells expressing LAT. Over residues 226-249 (PESSCPSSNQNTQKSPPAIASSSY) the composition is skewed to polar residues. A compositionally biased stretch (basic and acidic residues) spans 290–303 (NSEKPDPTKPDEKD). An SH2 domain is found at 309 to 418 (WYIGEYSRQA…RKQCYLTQPL (110 aa)).

In terms of assembly, when phosphorylated, interacts with PLCG1, PLCG2, GRB2, VAV and LAT. Associated with a tyrosine-phosphorylated polypeptide (p92) in response to immunoreceptor stimulation. Interacts with LBR and AGO2. Interacts with FGR. Part of a complex consisting of CLNK, SKAP1 and FYB1. Interacts (via SH2 domain) with FYB1; this interaction allows SKAP1 and FYB1 to promote tyrosine phosphorylation of CLNK by LYN. Interacts (via SH2 domain) with MAP4K1. Tyrosine-phosphorylated upon BCR cross-linking. Tyrosine phosphorylation at both Tyr-69 and Tyr-96 are required for BCR-induced calcium response and are essential to restore PLCG2-mediated signaling in BLNK-deficient DT40 cells, but this phosphorylation is dispensable in cells expressing LAT. Interacts with the SH2 domain of PLCG1 via phosphorylated Tyr-96. Tyrosine phosphorylation is increased when complexed with SKAP1 and FYB1. As to expression, expressed in T-cells, mast cells, natural killer and natural killer T cells (at protein level). Expressed in cytokine-stimulated hemopoietic cells.

The protein localises to the cytoplasm. In terms of biological role, an adapter protein which plays a role in the regulation of immunoreceptor signaling, including PLC-gamma-mediated B-cell antigen receptor (BCR) signaling and FC-epsilon R1-mediated mast cell degranulation. Together with FGR, it acts as a negative regulator of natural killer cell-activating receptors and inhibits interferon-gamma production. Acts as a positive regulator of both T-cell receptor and natural killer T (NKT) cell receptor signaling in CD4-positive NKT cells. Together with MAP4K1, it enhances CD3-triggered activation of T-cells and subsequent IL2 production. May be involved in tumor necrosis factor induced cell death by promoting reactive oxidative species generation, and MLKL oligomerization, ultimately leading to necrosis. Involved in phosphorylation of LAT. May be involved in high affinity immunoglobulin epsilon receptor signaling in mast cells. This Mus musculus (Mouse) protein is Cytokine-dependent hematopoietic cell linker (Clnk).